Reading from the N-terminus, the 316-residue chain is Ribonuclease Z (316 aa).

Residues His-63, His-65, Asp-67, His-68, His-143, Asp-213, and His-271 each contribute to the Zn(2+) site. The active-site Proton acceptor is Asp-67.

Belongs to the RNase Z family. Homodimer. Zn(2+) is required as a cofactor.

It catalyses the reaction Endonucleolytic cleavage of RNA, removing extra 3' nucleotides from tRNA precursor, generating 3' termini of tRNAs. A 3'-hydroxy group is left at the tRNA terminus and a 5'-phosphoryl group is left at the trailer molecule.. Zinc phosphodiesterase, which displays some tRNA 3'-processing endonuclease activity. Probably involved in tRNA maturation, by removing a 3'-trailer from precursor tRNA. This is Ribonuclease Z from Bacteroides thetaiotaomicron (strain ATCC 29148 / DSM 2079 / JCM 5827 / CCUG 10774 / NCTC 10582 / VPI-5482 / E50).